A 222-amino-acid polypeptide reads, in one-letter code: MKVLILACLVALALAREQEELNVVGETVESLSSSEESITHINKKIEKFQSEEQQQTEDELQDKIHPFAQAQSLVYPFTGPIPNSLPQNILPLTQTPVVVPPFLQPEIMGVPKVKETMVPKHKEMPFPKYPVEPFTESQSLTLTDVEKLHLPLPLVQSWMHQPPQPLPPTVMFPPQSVLSLSQPKVLPVPQKAVPQRDMPIQAFLLYQEPVLGPVRGPFPILV.

An N-terminal signal peptide occupies residues 1 to 15 (MKVLILACLVALALA). At Thr-27 the chain carries Phosphothreonine. Ser-30, Ser-32, Ser-33, and Ser-34 each carry phosphoserine.

This sequence belongs to the beta-casein family. In terms of tissue distribution, mammary gland specific. Secreted in milk.

The protein localises to the secreted. Important role in determination of the surface properties of the casein micelles. This is Beta-casein (CSN2) from Ovis aries (Sheep).